The sequence spans 117 residues: Transcription elongation factor SPT4-B (117 aa).

The interaction with SUPT5H stretch occupies residues 1–40; the sequence is MALETVPKDLRHLRACLLCSLVKTIDQFEYDGCDNCDAYL. Residues 16–36 form a C4-type zinc finger; that stretch reads CLLCSLVKTIDQFEYDGCDNC.

It belongs to the SPT4 family. As to quaternary structure, interacts with SUPT5H to form DSIF. DSIF interacts with the positive transcription elongation factor b complex (P-TEFb complex), which is composed of CDK9 and cyclin-T (CCNT1 or CCNT2). DSIF interacts with RNA polymerase II, and this interaction is reduced by phosphorylation of the C-terminal domain (CTD) of POLR2A by P-TEFb. DSIF also interacts with the NELF complex, which is composed of WHSC2/NELFA, COBRA1/NELFB, TH1L/NELFD and RDBP/NELFE, and this interaction occurs following prior binding of DSIF to RNA polymerase II. DSIF also interacts with HRMT1L2/PRMT1, HTATSF1/TATSF1, RNGTT/CAP1A, SKB1/PRMT5, SUPT6H, and can interact with PIN1. Ubiquitinated by Ubr5 when not assembled in the DSIF complex, leading to its degradation: Ubr5 recognizes and binds a degron that is not accessible when Supt4h1b is part of the DSIF complex. In terms of tissue distribution, expressed in brain, heart and liver.

The protein localises to the nucleus. In terms of biological role, component of the DRB sensitivity-inducing factor complex (DSIF complex), which regulates mRNA processing and transcription elongation by RNA polymerase II. DSIF positively regulates mRNA capping by stimulating the mRNA guanylyltransferase activity of RNGTT/CAP1A. DSIF also acts cooperatively with the negative elongation factor complex (NELF complex) to enhance transcriptional pausing at sites proximal to the promoter. Transcriptional pausing may facilitate the assembly of an elongation competent RNA polymerase II complex. DSIF and NELF promote pausing by inhibition of the transcription elongation factor TFIIS/S-II. TFIIS/S-II binds to RNA polymerase II at transcription pause sites and stimulates the weak intrinsic nuclease activity of the enzyme. Cleavage of blocked transcripts by RNA polymerase II promotes the resumption of transcription from the new 3' terminus and may allow repeated attempts at transcription through natural pause sites. This chain is Transcription elongation factor SPT4-B (Supt4h1b), found in Mus musculus (Mouse).